The following is a 173-amino-acid chain: Lens fiber membrane intrinsic protein (173 aa).

Over Met-1–Ser-3 the chain is Cytoplasmic. A helical membrane pass occupies residues Phe-4–Ala-24. At Thr-25–Ala-66 the chain is on the extracellular side. Residues Trp-43 and Trp-61 are each glycosylated (C-linked (Man) tryptophan). Asn-62 carries an N-linked (GlcNAc...) asparagine glycan. The helical transmembrane segment at Phe-67–Ala-87 threads the bilayer. Over Gln-88–Pro-98 the chain is Cytoplasmic. The helical transmembrane segment at Phe-99–Tyr-119 threads the bilayer. At Thr-120–Tyr-140 the chain is on the extracellular side. A helical transmembrane segment spans residues Ile-141–Tyr-161. Residues Arg-162 to Arg-173 lie on the Cytoplasmic side of the membrane. Position 170 is a phosphoserine (Ser-170). At Thr-171 the chain carries Phosphothreonine.

It belongs to the PMP-22/EMP/MP20 family. Seems to be associated with itself or another lens membrane component via disulfide bonds. Eye lens specific.

The protein localises to the membrane. Functionally, present in the thicker 16-17 nm junctions of mammalian lens fiber cells, where it may contribute to cell junctional organization. Acts as a receptor for calmodulin. May play an important role in both lens development and cataractogenesis. The protein is Lens fiber membrane intrinsic protein (Lim2) of Rattus norvegicus (Rat).